The sequence spans 208 residues: MGISRDHWHKRRATGGKRKPIRKKRKFELGRPAANTKLGPQRIHTVRTRGGNKKYRALRLDTGNFSWGSECTTRKTRIIDVVYNASNNELVRTKTLVKNAIVTIDATPFRQWYEGHYVLPLGRKRGAKLTEAEEEVLNKKRSKKAEAKYKARQRFAKVEPALEEQFATGRVLACISSRPGQCGREDGYILEGKELEFYMRRIKSKKAK.

Residues 1-33 (MGISRDHWHKRRATGGKRKPIRKKRKFELGRPA) are disordered. The segment covering 7-26 (HWHKRRATGGKRKPIRKKRK) has biased composition (basic residues).

This sequence belongs to the eukaryotic ribosomal protein eS8 family.

The protein is Small ribosomal subunit protein eS8 (RpS8) of Apis mellifera (Honeybee).